We begin with the raw amino-acid sequence, 61 residues long: Large ribosomal subunit protein uL30 (61 aa).

It belongs to the universal ribosomal protein uL30 family. Part of the 50S ribosomal subunit.

This is Large ribosomal subunit protein uL30 from Saccharophagus degradans (strain 2-40 / ATCC 43961 / DSM 17024).